The chain runs to 494 residues: Nuclear distribution protein PAC1 (494 aa).

In terms of domain architecture, LisH spans 14–46 (QKNELDKSVLRYLNWNYKQTVRHEHAQDYESVR). A coiled-coil region spans residues 90 to 123 (NSIVRLQKKIIELEQNTETLVSQIKDLNTQVSEL). WD repeat units follow at residues 153 to 192 (NVES…IPLA), 196 to 244 (SHTK…CKFQ), 251 to 292 (GHEH…SLKT), 295 to 334 (PHSQ…SVGT), 347 to 395 (HFIE…LMAH), 415 to 454 (GHLS…HVWE), and 457 to 492 (HTGF…SNVF).

This sequence belongs to the WD repeat LIS1/nudF family. Self-associates. Interacts with NDL1 and dynein.

It is found in the cytoplasm. It localises to the cytoskeleton. The protein localises to the spindle pole. Its function is as follows. Positively regulates the activity of the minus-end directed microtubule motor protein dynein. Plays a central role in positioning the mitotic spindle at the bud neck during cell division. Targets cytoplasmic dynein to microtubule plus ends, thereby promoting dynein-mediated microtubule sliding along the bud cortex and consequently the movement of the mitotic spindle to the bud neck. The protein is Nuclear distribution protein PAC1 of Saccharomyces cerevisiae (strain Lalvin EC1118 / Prise de mousse) (Baker's yeast).